We begin with the raw amino-acid sequence, 296 residues long: Phosphatidylserine decarboxylase proenzyme (296 aa).

Catalysis depends on charge relay system; for autoendoproteolytic cleavage activity residues Asp113, His169, and Ser256. Residue Ser256 is the Schiff-base intermediate with substrate; via pyruvic acid; for decarboxylase activity of the active site. Residue Ser256 is modified to Pyruvic acid (Ser); by autocatalysis.

The protein belongs to the phosphatidylserine decarboxylase family. PSD-B subfamily. Prokaryotic type II sub-subfamily. As to quaternary structure, heterodimer of a large membrane-associated beta subunit and a small pyruvoyl-containing alpha subunit. It depends on pyruvate as a cofactor. In terms of processing, is synthesized initially as an inactive proenzyme. Formation of the active enzyme involves a self-maturation process in which the active site pyruvoyl group is generated from an internal serine residue via an autocatalytic post-translational modification. Two non-identical subunits are generated from the proenzyme in this reaction, and the pyruvate is formed at the N-terminus of the alpha chain, which is derived from the carboxyl end of the proenzyme. The autoendoproteolytic cleavage occurs by a canonical serine protease mechanism, in which the side chain hydroxyl group of the serine supplies its oxygen atom to form the C-terminus of the beta chain, while the remainder of the serine residue undergoes an oxidative deamination to produce ammonia and the pyruvoyl prosthetic group on the alpha chain. During this reaction, the Ser that is part of the protease active site of the proenzyme becomes the pyruvoyl prosthetic group, which constitutes an essential element of the active site of the mature decarboxylase.

The protein localises to the cell membrane. The catalysed reaction is a 1,2-diacyl-sn-glycero-3-phospho-L-serine + H(+) = a 1,2-diacyl-sn-glycero-3-phosphoethanolamine + CO2. It participates in phospholipid metabolism; phosphatidylethanolamine biosynthesis; phosphatidylethanolamine from CDP-diacylglycerol: step 2/2. Functionally, catalyzes the formation of phosphatidylethanolamine (PtdEtn) from phosphatidylserine (PtdSer). The chain is Phosphatidylserine decarboxylase proenzyme from Clostridium beijerinckii (strain ATCC 51743 / NCIMB 8052) (Clostridium acetobutylicum).